The primary structure comprises 161 residues: MHLTGPTLLSLLAALLVSLGLLLWYPTKTRTKDKLLKDLNTLKINTVNLLNQVLKTDTTKLVDFHIANVHCDGIIDRLLSPDELAQLYHKDYPLYKRLVGCGYTKTVGLLHGFALWASETKTRDVSSLKYFIDCISTLDWKEPNLFAGFHTTESKVKKCIV.

A helical transmembrane segment spans residues 5-25 (GPTLLSLLAALLVSLGLLLWY).

It belongs to the IIV-6 203L/325L family.

The protein resides in the membrane. This is an uncharacterized protein from Invertebrate iridescent virus 3 (IIV-3).